Reading from the N-terminus, the 284-residue chain is Bifunctional protein FolD (284 aa).

NADP(+)-binding positions include 166-168 (GAS) and isoleucine 232.

This sequence belongs to the tetrahydrofolate dehydrogenase/cyclohydrolase family. Homodimer.

It catalyses the reaction (6R)-5,10-methylene-5,6,7,8-tetrahydrofolate + NADP(+) = (6R)-5,10-methenyltetrahydrofolate + NADPH. The enzyme catalyses (6R)-5,10-methenyltetrahydrofolate + H2O = (6R)-10-formyltetrahydrofolate + H(+). The protein operates within one-carbon metabolism; tetrahydrofolate interconversion. Its function is as follows. Catalyzes the oxidation of 5,10-methylenetetrahydrofolate to 5,10-methenyltetrahydrofolate and then the hydrolysis of 5,10-methenyltetrahydrofolate to 10-formyltetrahydrofolate. In Stutzerimonas stutzeri (strain A1501) (Pseudomonas stutzeri), this protein is Bifunctional protein FolD.